The following is a 453-amino-acid chain: Enolase (453 aa).

Glutamine 163 contributes to the (2R)-2-phosphoglycerate binding site. The Proton donor role is filled by glutamate 205. Mg(2+) is bound by residues aspartate 258, glutamate 308, and aspartate 335. (2R)-2-phosphoglycerate is bound by residues lysine 360, arginine 389, serine 390, and lysine 411. Lysine 360 (proton acceptor) is an active-site residue.

This sequence belongs to the enolase family. Mg(2+) serves as cofactor.

The protein resides in the cytoplasm. It localises to the secreted. The protein localises to the cell surface. The catalysed reaction is (2R)-2-phosphoglycerate = phosphoenolpyruvate + H2O. It participates in carbohydrate degradation; glycolysis; pyruvate from D-glyceraldehyde 3-phosphate: step 4/5. In terms of biological role, catalyzes the reversible conversion of 2-phosphoglycerate (2-PG) into phosphoenolpyruvate (PEP). It is essential for the degradation of carbohydrates via glycolysis. This chain is Enolase, found in Mesoplasma florum (strain ATCC 33453 / NBRC 100688 / NCTC 11704 / L1) (Acholeplasma florum).